A 302-amino-acid polypeptide reads, in one-letter code: Recombination-associated protein RdgC (302 aa).

Belongs to the RdgC family.

The protein localises to the cytoplasm. Its subcellular location is the nucleoid. May be involved in recombination. This Actinobacillus pleuropneumoniae serotype 5b (strain L20) protein is Recombination-associated protein RdgC.